Consider the following 748-residue polypeptide: Phytochrome-like protein Cph1 (748 aa).

A PAS domain is found at alanine 19–isoleucine 86. Residues serine 87 to arginine 510 are chromophore binding domain. The region spanning asparagine 152–glutamate 320 is the GAF domain. Cysteine 259 lines the a tetrapyrrole pocket. A Histidine kinase domain is found at isoleucine 535–asparagine 748. Histidine 538 carries the phosphohistidine; by autocatalysis modification.

This sequence in the N-terminal section; belongs to the phytochrome family. Homodimer. In terms of processing, contains one covalently linked tetrapyrrole chromophore.

The enzyme catalyses ATP + protein L-histidine = ADP + protein N-phospho-L-histidine.. Its function is as follows. Regulatory photoreceptor which exists in two forms that are reversibly interconvertible by light: the R form that absorbs maximally in the red region of the spectrum and the FR form that absorbs maximally in the far-red region. Also has a slight blue shift for the far-red maximum. Forms a two-component system with the Rrcp1 response regulator. The sequence is that of Phytochrome-like protein Cph1 (cph1) from Synechocystis sp. (strain ATCC 27184 / PCC 6803 / Kazusa).